A 566-amino-acid polypeptide reads, in one-letter code: Glucose starvation modulator protein 1 (566 aa).

Positions Cys-20–Cys-48 form a DNA-binding region, zn(2)-C6 fungal-type. 2 disordered regions span residues Pro-65–Ser-93 and Lys-250–Ser-270. The span at Pro-83 to Ser-93 shows a compositional bias: polar residues. Residues Ser-253–Ser-270 show a composition bias toward low complexity.

The protein belongs to the ERT1/acuK family.

It localises to the nucleus. Functionally, transcription factor which regulates nonfermentable carbon utilization. The sequence is that of Glucose starvation modulator protein 1 (ZCF23) from Candida albicans (strain SC5314 / ATCC MYA-2876) (Yeast).